The primary structure comprises 239 residues: Pimeloyl-[acyl-carrier protein] methyl ester esterase (239 aa).

Substrate-binding positions include tryptophan 20, serine 77–methionine 78, and phenylalanine 138–glutamine 142. The Nucleophile role is filled by serine 77. Catalysis depends on residues aspartate 192 and histidine 220. Histidine 220 provides a ligand contact to substrate.

It belongs to the AB hydrolase superfamily. Carboxylesterase BioH family. As to quaternary structure, monomer.

It localises to the cytoplasm. It catalyses the reaction 6-carboxyhexanoyl-[ACP] methyl ester + H2O = 6-carboxyhexanoyl-[ACP] + methanol + H(+). The protein operates within cofactor biosynthesis; biotin biosynthesis. Its function is as follows. The physiological role of BioH is to remove the methyl group introduced by BioC when the pimeloyl moiety is complete. It allows to synthesize pimeloyl-ACP via the fatty acid synthetic pathway through the hydrolysis of the ester bonds of pimeloyl-ACP esters. The polypeptide is Pimeloyl-[acyl-carrier protein] methyl ester esterase (Legionella pneumophila (strain Lens)).